The chain runs to 476 residues: Glycogen synthase (476 aa).

Lys-15 provides a ligand contact to ADP-alpha-D-glucose.

It belongs to the glycosyltransferase 1 family. Bacterial/plant glycogen synthase subfamily.

It carries out the reaction [(1-&gt;4)-alpha-D-glucosyl](n) + ADP-alpha-D-glucose = [(1-&gt;4)-alpha-D-glucosyl](n+1) + ADP + H(+). It functions in the pathway glycan biosynthesis; glycogen biosynthesis. Functionally, synthesizes alpha-1,4-glucan chains using ADP-glucose. The protein is Glycogen synthase of Lactobacillus acidophilus (strain ATCC 700396 / NCK56 / N2 / NCFM).